Reading from the N-terminus, the 274-residue chain is Centromere protein K (274 aa).

Residues 1–21 are disordered; that stretch reads MSGYQHELPPNISKTSPAPEE. Residues 96 to 159 are a coiled coil; sequence KEELEKIAQE…NQLTAFSEKR (64 aa).

The protein belongs to the CENP-K/MCM22 family.

Its subcellular location is the nucleus. It localises to the chromosome. The protein resides in the centromere. It is found in the kinetochore. Its function is as follows. Probable component of a centromeric complex involved in assembly of kinetochore proteins, mitotic progression and chromosome segregation. The chain is Centromere protein K (cenpk) from Xenopus laevis (African clawed frog).